A 57-amino-acid polypeptide reads, in one-letter code: MNIEELKKQAETEIADFIAQKIAELNKNTGKEVSEIRFTAREKMTGLESYDVKIKIM.

This sequence belongs to the gns family.

In Escherichia coli O6:H1 (strain CFT073 / ATCC 700928 / UPEC), this protein is Protein GnsA (gnsA).